A 234-amino-acid chain; its full sequence is Sugar fermentation stimulation protein A (234 aa).

The H-T-H motif DNA-binding region spans 201–220 (LLSEAQQRGVEILAYKAEIS).

It belongs to the SfsA family.

Its function is as follows. Binds to DNA non-specifically. Could be a regulatory factor involved in maltose metabolism. This chain is Sugar fermentation stimulation protein A, found in Shigella flexneri serotype 5b (strain 8401).